A 455-amino-acid chain; its full sequence is Bifunctional protein GlmU (455 aa).

The tract at residues Met-1–Pro-232 is pyrophosphorylase. Residues Leu-10–Gly-13, Lys-24, Gln-75, and Gly-80–Thr-81 each bind UDP-N-acetyl-alpha-D-glucosamine. Asp-106 serves as a coordination point for Mg(2+). Gly-141, Glu-155, Asn-172, and Asn-230 together coordinate UDP-N-acetyl-alpha-D-glucosamine. Asn-230 contacts Mg(2+). Positions Ala-233–Gly-253 are linker. Residues Gly-254 to Ala-455 are N-acetyltransferase. Residues Arg-336 and Lys-354 each coordinate UDP-N-acetyl-alpha-D-glucosamine. His-366 serves as the catalytic Proton acceptor. The UDP-N-acetyl-alpha-D-glucosamine site is built by Tyr-369 and Asn-380. Acetyl-CoA contacts are provided by residues Ala-383, Asn-389 to Tyr-390, Ser-408, Ala-426, and Arg-443.

This sequence in the N-terminal section; belongs to the N-acetylglucosamine-1-phosphate uridyltransferase family. In the C-terminal section; belongs to the transferase hexapeptide repeat family. As to quaternary structure, homotrimer. Requires Mg(2+) as cofactor.

It localises to the cytoplasm. It catalyses the reaction alpha-D-glucosamine 1-phosphate + acetyl-CoA = N-acetyl-alpha-D-glucosamine 1-phosphate + CoA + H(+). It carries out the reaction N-acetyl-alpha-D-glucosamine 1-phosphate + UTP + H(+) = UDP-N-acetyl-alpha-D-glucosamine + diphosphate. It participates in nucleotide-sugar biosynthesis; UDP-N-acetyl-alpha-D-glucosamine biosynthesis; N-acetyl-alpha-D-glucosamine 1-phosphate from alpha-D-glucosamine 6-phosphate (route II): step 2/2. Its pathway is nucleotide-sugar biosynthesis; UDP-N-acetyl-alpha-D-glucosamine biosynthesis; UDP-N-acetyl-alpha-D-glucosamine from N-acetyl-alpha-D-glucosamine 1-phosphate: step 1/1. The protein operates within bacterial outer membrane biogenesis; LPS lipid A biosynthesis. Functionally, catalyzes the last two sequential reactions in the de novo biosynthetic pathway for UDP-N-acetylglucosamine (UDP-GlcNAc). The C-terminal domain catalyzes the transfer of acetyl group from acetyl coenzyme A to glucosamine-1-phosphate (GlcN-1-P) to produce N-acetylglucosamine-1-phosphate (GlcNAc-1-P), which is converted into UDP-GlcNAc by the transfer of uridine 5-monophosphate (from uridine 5-triphosphate), a reaction catalyzed by the N-terminal domain. The sequence is that of Bifunctional protein GlmU from Nitratidesulfovibrio vulgaris (strain DP4) (Desulfovibrio vulgaris).